The sequence spans 177 residues: Adenine phosphoribosyltransferase (177 aa).

It belongs to the purine/pyrimidine phosphoribosyltransferase family. In terms of assembly, homodimer.

The protein localises to the cytoplasm. The enzyme catalyses AMP + diphosphate = 5-phospho-alpha-D-ribose 1-diphosphate + adenine. Its pathway is purine metabolism; AMP biosynthesis via salvage pathway; AMP from adenine: step 1/1. In terms of biological role, catalyzes a salvage reaction resulting in the formation of AMP, that is energically less costly than de novo synthesis. This chain is Adenine phosphoribosyltransferase, found in Mycoplasma pneumoniae (strain ATCC 29342 / M129 / Subtype 1) (Mycoplasmoides pneumoniae).